The sequence spans 591 residues: N-acetylgalactosaminyltransferase 7 (591 aa).

Topologically, residues 1–11 are cytoplasmic; it reads MRVSTIRSGRI. The chain crosses the membrane as a helical; Signal-anchor for type II membrane protein span at residues 12 to 29; that stretch reads CRLALCLLVLLPLLYLLA. N-linked (GlcNAc...) asparagine glycosylation occurs at N30. Residues 30–591 lie on the Lumenal side of the membrane; sequence NWSDHHKRVQ…WWFKEIRPRW (562 aa). A disordered region spans residues 68-100; that stretch reads DGLGNFEPKDVKPRSGPGENGEAHSLSPDKKHM. 5 cysteine pairs are disulfide-bonded: C132-C367, C358-C441, C479-C496, C519-C532, and C558-C573. The catalytic subdomain A stretch occupies residues 141 to 251; it reads LPRTSVIIVF…TNWLPPLLAP (111 aa). The substrate site is built by D182 and R212. 2 residues coordinate Mn(2+): D235 and H237. The interval 313 to 375 is catalytic subdomain B; the sequence is PYRSPTHAGG…PCSRVGHVYR (63 aa). Position 344 (W344) interacts with substrate. H372 contacts Mn(2+). R375 and Y380 together coordinate substrate. The region spanning 466–585 is the Ricin B-type lectin domain; the sequence is LHWGELRSVA…NDSYQQWWFK (120 aa). An N-linked (GlcNAc...) asparagine glycan is attached at N576.

This sequence belongs to the glycosyltransferase 2 family. GalNAc-T subfamily. Requires Mn(2+) as cofactor. In terms of tissue distribution, expressed in developing oocytes and egg chambers. During embryonic stages 9-11, expressed in the primordium of the foregut, midgut and hindgut. Expressed in the salivary glands from embryonic stage 12 onwards. During embryonic stages 12-13, expressed in the posterior midgut and hindgut. During embryonic stages 14-15, expression continues in the hindgut. During embryonic stages 16-17, expressed in the antennomaxillary complex. In third instar larvae, ubiquitously expressed in wing, with increased expression in the notum and ventral wing pouch, eye-antennal, leg and haltere imaginal disks.

Its subcellular location is the golgi apparatus membrane. The enzyme catalyses L-seryl-[protein] + UDP-N-acetyl-alpha-D-galactosamine = a 3-O-[N-acetyl-alpha-D-galactosaminyl]-L-seryl-[protein] + UDP + H(+). It carries out the reaction L-threonyl-[protein] + UDP-N-acetyl-alpha-D-galactosamine = a 3-O-[N-acetyl-alpha-D-galactosaminyl]-L-threonyl-[protein] + UDP + H(+). Its pathway is protein modification; protein glycosylation. Functionally, glycopeptide transferase involved in O-linked oligosaccharide biosynthesis, which catalyzes the transfer of an N-acetyl-D-galactosamine residue to an already glycosylated peptide. In contrast to other proteins of the family, it does not act as a peptide transferase that transfers GalNAc onto serine or threonine residue on the protein receptor, but instead requires the prior addition of a GalNAc on a peptide before adding additional GalNAc moieties. Some peptide transferase activity is however not excluded, considering that its appropriate peptide substrate may remain unidentified. Prefers the monoglycosylated Muc5AC-3 as substrate. Might have a role in protein O-glycosylation in the Golgi and thereby in establishing and/or maintaining a proper secretory apparatus structure. The sequence is that of N-acetylgalactosaminyltransferase 7 from Drosophila melanogaster (Fruit fly).